The following is a 497-amino-acid chain: MGGYILAIDQGTTSTRAIVFDGNQKIAGVGQKEFKQHFPKSGWVEHDPEEIWQTVVSTVKEAIEKSGITANDIAAIGITNQRETVVVWDRETGKPIHNAIVWQDRRTAAFCDKLKKKGLEKTFVKKTGLLLDPYFSGTKLNWLLSNVKGAQVRAAKGELCFGTIDTFLIWRLTGGECFCTDATNASRTLLYNIAENAWDDELTEVLRVPKEMLPEVKDCAADFGVTDPSLFGAAIPILGVAGDQQAATIGQACFKPGMLKSTYGTGCFALLNTGKDMVRSKNRLLTTIAYRLDGETTYALEGSIFVAGAAVQWLRDGLKVIKAAPDTGSLAESADPSQEVYLVPAFTGLGAPHWDPDARGAIFGMTRNTGPAEFARAALEAVCYQTRDLLEAMHKDWRRNGNDTVLRVDGGMVASDWTMQRLSDLLDAPVDRPVILETTALGVAWLAGSRAGVWPNQEAFAKSWARDRRFEPHMDEATRKVKLKGWRSAVKRTLIAA.

Thr-12 serves as a coordination point for ADP. The ATP site is built by Thr-12, Thr-13, and Ser-14. A sn-glycerol 3-phosphate-binding site is contributed by Thr-12. Arg-16 serves as a coordination point for ADP. Sn-glycerol 3-phosphate-binding residues include Arg-82, Glu-83, Tyr-134, and Asp-243. Positions 82, 83, 134, 243, and 244 each coordinate glycerol. Thr-265 and Gly-308 together coordinate ADP. Positions 265, 308, 312, and 411 each coordinate ATP. Gly-411 is a binding site for ADP.

The protein belongs to the FGGY kinase family.

It carries out the reaction glycerol + ATP = sn-glycerol 3-phosphate + ADP + H(+). It participates in polyol metabolism; glycerol degradation via glycerol kinase pathway; sn-glycerol 3-phosphate from glycerol: step 1/1. Inhibited by fructose 1,6-bisphosphate (FBP). In terms of biological role, key enzyme in the regulation of glycerol uptake and metabolism. Catalyzes the phosphorylation of glycerol to yield sn-glycerol 3-phosphate. The polypeptide is Glycerol kinase (Rhizobium meliloti (strain 1021) (Ensifer meliloti)).